The chain runs to 445 residues: 23S rRNA (uracil(1939)-C(5))-methyltransferase RlmD (445 aa).

The TRAM domain occupies 12-70 (SKQLSSKLSLKVTQLDHLGAGIAHHDGKIVFINGALPGETVSVQLTEQKKKFARAKLLK). Positions 83, 89, 92, and 171 each coordinate [4Fe-4S] cluster. Residues Gln-278, Phe-307, Asn-312, Glu-328, Asp-355, and Asp-375 each contribute to the S-adenosyl-L-methionine site. The active-site Nucleophile is Cys-401.

This sequence belongs to the class I-like SAM-binding methyltransferase superfamily. RNA M5U methyltransferase family. RlmD subfamily.

It carries out the reaction uridine(1939) in 23S rRNA + S-adenosyl-L-methionine = 5-methyluridine(1939) in 23S rRNA + S-adenosyl-L-homocysteine + H(+). Its function is as follows. Catalyzes the formation of 5-methyl-uridine at position 1939 (m5U1939) in 23S rRNA. This Shewanella halifaxensis (strain HAW-EB4) protein is 23S rRNA (uracil(1939)-C(5))-methyltransferase RlmD.